The primary structure comprises 487 residues: Cytochrome P450 2C21 (487 aa).

Residue cysteine 432 coordinates heme.

This sequence belongs to the cytochrome P450 family. Requires heme as cofactor. Liver.

It is found in the endoplasmic reticulum membrane. Its subcellular location is the microsome membrane. The enzyme catalyses an organic molecule + reduced [NADPH--hemoprotein reductase] + O2 = an alcohol + oxidized [NADPH--hemoprotein reductase] + H2O + H(+). Functionally, cytochromes P450 are a group of heme-thiolate monooxygenases. In liver microsomes, this enzyme is involved in an NADPH-dependent electron transport pathway. It oxidizes a variety of structurally unrelated compounds, including steroids, fatty acids, and xenobiotics. Showed testosterone hydrolase activity. The polypeptide is Cytochrome P450 2C21 (CYP2C21) (Canis lupus familiaris (Dog)).